A 173-amino-acid chain; its full sequence is Peptidoglycan-associated lipoprotein (173 aa).

The N-terminal stretch at 1 to 21 (MKSKKIFKILTLLLPMITTFS) is a signal peptide. Cys22 carries the N-palmitoyl cysteine lipid modification. Cys22 is lipidated: S-diacylglycerol cysteine. Residues 59–173 (ETLEKLKKGN…KNRRSVIIYQ (115 aa)) form the OmpA-like domain.

It belongs to the Pal lipoprotein family.

The protein resides in the cell outer membrane. The sequence is that of Peptidoglycan-associated lipoprotein from Buchnera aphidicola subsp. Baizongia pistaciae (strain Bp).